The following is a 297-amino-acid chain: ATP synthase gamma chain (297 aa).

Belongs to the ATPase gamma chain family. F-type ATPases have 2 components, CF(1) - the catalytic core - and CF(0) - the membrane proton channel. CF(1) has five subunits: alpha(3), beta(3), gamma(1), delta(1), epsilon(1). CF(0) has three main subunits: a, b and c.

It localises to the cell membrane. Produces ATP from ADP in the presence of a proton gradient across the membrane. The gamma chain is believed to be important in regulating ATPase activity and the flow of protons through the CF(0) complex. This Micrococcus luteus (strain ATCC 4698 / DSM 20030 / JCM 1464 / CCM 169 / CCUG 5858 / IAM 1056 / NBRC 3333 / NCIMB 9278 / NCTC 2665 / VKM Ac-2230) (Micrococcus lysodeikticus) protein is ATP synthase gamma chain.